Here is a 660-residue protein sequence, read N- to C-terminus: PAN2-PAN3 deadenylation complex subunit PAN3 (660 aa).

The segment at 7–36 adopts a C3H1-type zinc-finger fold; the sequence is SAKDTFCKNVLIYGYCKYENKGCAFSHTVK. 2 disordered regions span residues 36–60 and 150–186; these read KPTSSVPGSQGSNATTNSSGNTNAD and SPVMAQSVSTPGAKANGNIQHNPYLPGNAGTPQPTSA. The segment covering 43 to 59 has biased composition (low complexity); that stretch reads GSQGSNATTNSSGNTNA. Positions 59–79 match the PABPC-interacting motif-2 (PAM-2) motif; sequence ADMKKKFNFNTPSFQPSTVPN. The segment covering 150–159 has biased composition (polar residues); the sequence is SPVMAQSVST. Residues 252 to 528 are pseudokinase domain; that stretch reads QTLPRSNLPD…LQEFNRNHLS (277 aa). ATP contacts are provided by residues Arg-304, 358–365, and 415–416; these read DYFPNSNT and SK. The stretch at 529–567 forms a coiled coil; the sequence is RRILNFCSNAQDSQDFMESQLSTELENARVFRLITKLNF. The interval 568 to 660 is knob domain; it reads IIDRPEYDND…DSAFRTLTRG (93 aa).

It belongs to the protein kinase superfamily. PAN3 family. In terms of assembly, homodimer. Forms a heterotrimer with a catalytic subunit PAN2 to form the poly(A)-nuclease (PAN) deadenylation complex. Interacts (via PAM-2 motif) with poly(A)-binding protein PAB1 (via PABC domain), conferring substrate specificity of the enzyme complex.

Its subcellular location is the cytoplasm. Its function is as follows. Regulatory subunit of the poly(A)-nuclease (PAN) deadenylation complex, one of two cytoplasmic mRNA deadenylases involved in mRNA turnover. PAN specifically shortens poly(A) tails of RNA and the activity is stimulated by poly(A)-binding protein PAB1. PAN deadenylation is followed by rapid degradation of the shortened mRNA tails by the CCR4-NOT complex. Deadenylated mRNAs are then degraded by two alternative mechanisms, namely exosome-mediated 3'-5' exonucleolytic degradation, or deadenylation-dependent mRNA decaping and subsequent 5'-3' exonucleolytic degradation by XRN1. May also be involved in post-transcriptional maturation of mRNA poly(A) tails. PAN3 acts as a positive regulator for PAN activity, recruiting the catalytic subunit PAN2 to mRNA via its interaction with RNA and with PAB1. This is PAN2-PAN3 deadenylation complex subunit PAN3 from Debaryomyces hansenii (strain ATCC 36239 / CBS 767 / BCRC 21394 / JCM 1990 / NBRC 0083 / IGC 2968) (Yeast).